The following is a 518-amino-acid chain: Putative cytochrome P450 CYP13A6 (518 aa).

Cysteine 463 lines the heme pocket.

This sequence belongs to the cytochrome P450 family. Heme is required as a cofactor.

Its function is as follows. Cytochromes P450 are a group of heme-thiolate monooxygenases. They oxidize a variety of structurally unrelated compounds, including steroids, fatty acids, and xenobiotics. This chain is Putative cytochrome P450 CYP13A6 (cyp-13A6), found in Caenorhabditis elegans.